The primary structure comprises 302 residues: Nucleotide-binding protein Bcep1808_2900 (302 aa).

8–15 (GISGSGKS) lines the ATP pocket. Residue 57–60 (DARS) participates in GTP binding.

The protein belongs to the RapZ-like family.

Its function is as follows. Displays ATPase and GTPase activities. This chain is Nucleotide-binding protein Bcep1808_2900, found in Burkholderia vietnamiensis (strain G4 / LMG 22486) (Burkholderia cepacia (strain R1808)).